We begin with the raw amino-acid sequence, 1489 residues long: ZEB2-regulated ABC transporter 1 (1489 aa).

Residues 1 to 55 are disordered; sequence MALPEANMSSTRSEQSSRSHDTIVGNEQPHSEKPAASAPGDQMSSDDEDEGPQTE. N-linked (GlcNAc...) asparagine glycosylation is present at Asn-7. Residues 44–53 are compositionally biased toward acidic residues; the sequence is SSDDEDEGPQ. 5 N-linked (GlcNAc...) asparagine glycosylation sites follow: Asn-70, Asn-73, Asn-118, Asn-332, and Asn-469. One can recognise an ABC transporter 1 domain in the interval 152 to 408; the sequence is LGLPDMVHQM…FINLGFECPD (257 aa). 5 helical membrane passes run 513-533, 552-572, 599-619, 628-648, and 662-682; these read LLGS…VAFI, GATL…EILT, ILVD…TLYF, GAFF…SGVF, and MVPA…VVPV. Asn-714 is a glycosylation site (N-linked (GlcNAc...) asparagine). The chain crosses the membrane as a helical span at residues 773–793; sequence GILIAMTIFNHVVYIVATEFI. A disordered region spans residues 811 to 834; sequence PSKAKSDPEASSSRPIPTTEKNNN. A compositionally biased stretch (polar residues) spans 819-834; that stretch reads EASSSRPIPTTEKNNN. The ABC transporter 2 domain maps to 846 to 1088; that stretch reads FHWNDVCYDI…TLTNYFVKHG (243 aa). 882–889 is a binding site for ATP; it reads GVSGAGKT. 5 consecutive transmembrane segments (helical) span residues 1190–1210, 1218–1238, 1269–1289, 1307–1327, and 1333–1353; these read ALCI…PLSL, FAIF…MPHF, IPWN…PVGF, WLLI…AIAI, and AGGN…GVLA. N-linked (GlcNAc...) asparagine glycosylation occurs at Asn-1402. The chain crosses the membrane as a helical span at residues 1457–1477; sequence GIGMVYIVVNIVGALFLYWLI.

The protein belongs to the ABC transporter superfamily. ABCG family. PDR (TC 3.A.1.205) subfamily.

The protein localises to the cell membrane. Its subcellular location is the vacuole membrane. In terms of biological role, ABC transporter involved in zearalenone production. The chain is ZEB2-regulated ABC transporter 1 from Gibberella zeae (strain ATCC MYA-4620 / CBS 123657 / FGSC 9075 / NRRL 31084 / PH-1) (Wheat head blight fungus).